Reading from the N-terminus, the 491-residue chain is Probable glycine dehydrogenase (decarboxylating) subunit 2 (491 aa).

At K264 the chain carries N6-(pyridoxal phosphate)lysine.

Belongs to the GcvP family. C-terminal subunit subfamily. The glycine cleavage system is composed of four proteins: P, T, L and H. In this organism, the P 'protein' is a heterodimer of two subunits. Pyridoxal 5'-phosphate is required as a cofactor.

It catalyses the reaction N(6)-[(R)-lipoyl]-L-lysyl-[glycine-cleavage complex H protein] + glycine + H(+) = N(6)-[(R)-S(8)-aminomethyldihydrolipoyl]-L-lysyl-[glycine-cleavage complex H protein] + CO2. The glycine cleavage system catalyzes the degradation of glycine. The P protein binds the alpha-amino group of glycine through its pyridoxal phosphate cofactor; CO(2) is released and the remaining methylamine moiety is then transferred to the lipoamide cofactor of the H protein. In Coxiella burnetii (strain Dugway 5J108-111), this protein is Probable glycine dehydrogenase (decarboxylating) subunit 2.